A 416-amino-acid chain; its full sequence is UDP-N-acetylmuramoylalanine--D-glutamate ligase (416 aa).

108–114 serves as a coordination point for ATP; the sequence is GTVGKTT.

The protein belongs to the MurCDEF family.

It is found in the cytoplasm. It carries out the reaction UDP-N-acetyl-alpha-D-muramoyl-L-alanine + D-glutamate + ATP = UDP-N-acetyl-alpha-D-muramoyl-L-alanyl-D-glutamate + ADP + phosphate + H(+). Its pathway is cell wall biogenesis; peptidoglycan biosynthesis. Its function is as follows. Cell wall formation. Catalyzes the addition of glutamate to the nucleotide precursor UDP-N-acetylmuramoyl-L-alanine (UMA). This is UDP-N-acetylmuramoylalanine--D-glutamate ligase from Chlamydia muridarum (strain MoPn / Nigg).